The following is a 388-amino-acid chain: Chorismate synthase (388 aa).

Arg-39 and Arg-45 together coordinate NADP(+). Residues 132-134 (RSS), 251-252 (NA), Gly-296, 311-315 (KPIPT), and Arg-337 contribute to the FMN site.

The protein belongs to the chorismate synthase family. As to quaternary structure, homotetramer. Requires FMNH2 as cofactor.

It catalyses the reaction 5-O-(1-carboxyvinyl)-3-phosphoshikimate = chorismate + phosphate. The protein operates within metabolic intermediate biosynthesis; chorismate biosynthesis; chorismate from D-erythrose 4-phosphate and phosphoenolpyruvate: step 7/7. Catalyzes the anti-1,4-elimination of the C-3 phosphate and the C-6 proR hydrogen from 5-enolpyruvylshikimate-3-phosphate (EPSP) to yield chorismate, which is the branch point compound that serves as the starting substrate for the three terminal pathways of aromatic amino acid biosynthesis. This reaction introduces a second double bond into the aromatic ring system. In Staphylococcus aureus (strain Mu50 / ATCC 700699), this protein is Chorismate synthase.